Reading from the N-terminus, the 372-residue chain is Tyrosine--tRNA ligase (372 aa).

5 residues coordinate L-tyrosine: Tyr-37, Tyr-169, Gln-173, Asp-176, and Gln-191. The short motif at 246–250 (KMSKS) is the 'KMSKS' region element. Lys-249 serves as a coordination point for ATP.

This sequence belongs to the class-I aminoacyl-tRNA synthetase family. TyrS type 4 subfamily. In terms of assembly, homodimer.

The protein localises to the cytoplasm. The catalysed reaction is tRNA(Tyr) + L-tyrosine + ATP = L-tyrosyl-tRNA(Tyr) + AMP + diphosphate + H(+). Catalyzes the attachment of tyrosine to tRNA(Tyr) in a two-step reaction: tyrosine is first activated by ATP to form Tyr-AMP and then transferred to the acceptor end of tRNA(Tyr). The sequence is that of Tyrosine--tRNA ligase from Pyrobaculum arsenaticum (strain DSM 13514 / JCM 11321 / PZ6).